A 186-amino-acid chain; its full sequence is Lactoylglutathione lyase (186 aa).

One can recognise a VOC domain in the interval 28 to 175 (FMQQTMFRIK…DGYWIELFDR (148 aa)). Residues glutamine 31 and arginine 35 each coordinate substrate. Residue glutamine 31 participates in Zn(2+) binding. Residue glutamate 97 participates in Zn(2+) binding. Residues asparagine 101, arginine 121, histidine 125, and 155-156 (KM) contribute to the substrate site. Residue histidine 125 participates in Zn(2+) binding. Residue glutamate 171 coordinates Zn(2+). The active-site Proton donor/acceptor is the glutamate 171.

It belongs to the glyoxalase I family. Zn(2+) is required as a cofactor.

The enzyme catalyses (R)-S-lactoylglutathione = methylglyoxal + glutathione. It participates in secondary metabolite metabolism; methylglyoxal degradation; (R)-lactate from methylglyoxal: step 1/2. Its function is as follows. Catalyzes the conversion of hemimercaptal, formed from methylglyoxal and glutathione, to S-lactoylglutathione. The sequence is that of Lactoylglutathione lyase from Cicer arietinum (Chickpea).